We begin with the raw amino-acid sequence, 396 residues long: MAAVDTFLFTSESVNEGHPDKLCDQISDAVLDACLAEDPDSKVACETCTKTNMVMVFGEITTKANVDYEKIVRDTCRGIGFVSNDVGLDADHCKVLVNIEQQSPDIAQGVHGHFTKRPEEIGAGDQGHMFGYATDETPEFMPLSHVLATKLGARLTEVRKNATCPWLRPDGKTQVTVEYHNDNGAMVPIRVHTVLISTQHDETVTNDEIAADLKEHVIKPVIPEQYLDENTIFHLNPSGRFVIGGPHGDAGLTGRKIIIDTYGGWGAHGGGAFSGKDPTKVDRSGAYVARQAAKSIVASGIARRCIVQVSYAIGVPEPLSVFVDTYGTGKIPDKEILEIVKENFDFRPGMIIINLDLKRGGKGRYLKTAAYGHFGREGADFTWEVVKPLKWEKPSA.

A Mg(2+)-binding site is contributed by glutamate 12. Residue histidine 18 coordinates ATP. Glutamate 46 is a binding site for K(+). L-methionine is bound by residues glutamate 59 and glutamine 102. Residues 170 to 172, 238 to 241, aspartate 249, 255 to 256, alanine 272, lysine 276, and lysine 280 each bind ATP; these read DGK, SGRF, and RK. Aspartate 249 serves as a coordination point for L-methionine. An L-methionine-binding site is contributed by lysine 280.

The protein belongs to the AdoMet synthase family. As to quaternary structure, homotetramer. Mn(2+) serves as cofactor. Requires Mg(2+) as cofactor. The cofactor is Co(2+). K(+) is required as a cofactor.

It is found in the cytoplasm. It carries out the reaction L-methionine + ATP + H2O = S-adenosyl-L-methionine + phosphate + diphosphate. It participates in amino-acid biosynthesis; S-adenosyl-L-methionine biosynthesis; S-adenosyl-L-methionine from L-methionine: step 1/1. In terms of biological role, catalyzes the formation of S-adenosylmethionine from methionine and ATP. The reaction comprises two steps that are both catalyzed by the same enzyme: formation of S-adenosylmethionine (AdoMet) and triphosphate, and subsequent hydrolysis of the triphosphate. The protein is S-adenosylmethionine synthase (SAMS) of Triticum aestivum (Wheat).